The sequence spans 561 residues: Phosphatidylinositol 4-kinase gamma 1 (561 aa).

The PI3K/PI4K catalytic domain occupies 121 to 416 (GAQPLLLPSG…SVFGKTSEDS (296 aa)). Residues 127-133 (LPSGMGG) are G-loop. ATP is bound by residues 128–134 (PSGMGGA), lysine 149, and 233–236 (QRFV). The segment at 266-274 (LNLDRHAGN) is catalytic loop. An activation loop region spans residues 296–322 (PIDHGLCLPECLDDPYFEWLNWPQALV). Aspartate 298 contacts ATP. The interval 456–520 (PPLVPRGPRA…PISPNHDESK (65 aa)) is disordered. Over residues 467–484 (TIPNDVTASMSSSQNQRI) the composition is skewed to polar residues.

This sequence belongs to the PI3/PI4-kinase family. Type II PI4K subfamily.

It carries out the reaction a 1,2-diacyl-sn-glycero-3-phospho-(1D-myo-inositol) + ATP = a 1,2-diacyl-sn-glycero-3-phospho-(1D-myo-inositol 4-phosphate) + ADP + H(+). Its function is as follows. The phosphorylation of phosphatidylinositol (PI) to PI4P is the first committed step in the generation of phosphatidylinositol 4,5-bisphosphate (PIP2), a precursor of the second messenger inositol 1,4,5-trisphosphate (InsP3). The chain is Phosphatidylinositol 4-kinase gamma 1 (PI4KG1) from Arabidopsis thaliana (Mouse-ear cress).